A 333-amino-acid chain; its full sequence is Ornithine carbamoyltransferase (333 aa).

Residues 57 to 60, R108, and 135 to 138 contribute to the carbamoyl phosphate site; these read STRT and HPTQ. Residues N168, D232, and 236–237 each bind L-ornithine; that span reads SM. Carbamoyl phosphate-binding positions include 274–275 and R319; that span reads CL.

The protein belongs to the aspartate/ornithine carbamoyltransferase superfamily. OTCase family.

The protein resides in the cytoplasm. It carries out the reaction carbamoyl phosphate + L-ornithine = L-citrulline + phosphate + H(+). Its pathway is amino-acid degradation; L-arginine degradation via ADI pathway; carbamoyl phosphate from L-arginine: step 2/2. Functionally, reversibly catalyzes the transfer of the carbamoyl group from carbamoyl phosphate (CP) to the N(epsilon) atom of ornithine (ORN) to produce L-citrulline. In Pediococcus pentosaceus (strain ATCC 25745 / CCUG 21536 / LMG 10740 / 183-1w), this protein is Ornithine carbamoyltransferase.